The primary structure comprises 244 residues: Protein A47 (244 aa).

Belongs to the orthopoxvirus A47 protein family.

The polypeptide is Protein A47 (Homo sapiens (Human)).